The chain runs to 215 residues: Transcription elongation factor A protein-like 4 (215 aa).

Met1 is subject to N-acetylmethionine. The tract at residues 1-133 (MEKLYSENEG…RKAKRKTNKG (133 aa)) is disordered. Ser6, Ser88, and Ser102 each carry phosphoserine. The span at 25–102 (QDERKPEVTC…KPEIEGKPES (78 aa)) shows a compositional bias: basic and acidic residues.

It belongs to the TFS-II family. TFA subfamily.

The protein localises to the nucleus. May be involved in transcriptional regulation. The sequence is that of Transcription elongation factor A protein-like 4 (TCEAL4) from Homo sapiens (Human).